The chain runs to 401 residues: Argininosuccinate synthase (401 aa).

9–17 (AYSGGLDTS) contacts ATP. Tyr-86 provides a ligand contact to L-citrulline. Gly-116 is a binding site for ATP. Residues Thr-118, Asn-122, and Asp-123 each coordinate L-aspartate. Asn-122 contacts L-citrulline. Residues Arg-126, Ser-174, Ser-183, Glu-259, and Tyr-271 each contribute to the L-citrulline site.

It belongs to the argininosuccinate synthase family. Type 1 subfamily. As to quaternary structure, homotetramer.

It is found in the cytoplasm. It catalyses the reaction L-citrulline + L-aspartate + ATP = 2-(N(omega)-L-arginino)succinate + AMP + diphosphate + H(+). It participates in amino-acid biosynthesis; L-arginine biosynthesis; L-arginine from L-ornithine and carbamoyl phosphate: step 2/3. The polypeptide is Argininosuccinate synthase (Bacillus mycoides (strain KBAB4) (Bacillus weihenstephanensis)).